Consider the following 258-residue polypeptide: Trans-aconitate 2-methyltransferase (258 aa).

Belongs to the methyltransferase superfamily. Tam family.

Its subcellular location is the cytoplasm. It catalyses the reaction trans-aconitate + S-adenosyl-L-methionine = (E)-3-(methoxycarbonyl)pent-2-enedioate + S-adenosyl-L-homocysteine. In terms of biological role, catalyzes the S-adenosylmethionine monomethyl esterification of trans-aconitate. The protein is Trans-aconitate 2-methyltransferase of Deinococcus radiodurans (strain ATCC 13939 / DSM 20539 / JCM 16871 / CCUG 27074 / LMG 4051 / NBRC 15346 / NCIMB 9279 / VKM B-1422 / R1).